The sequence spans 444 residues: Ribulose bisphosphate carboxylase large chain (444 aa).

The residue at position 7 (Lys7) is an N6,N6,N6-trimethyllysine. Substrate contacts are provided by Asn116 and Thr166. The Proton acceptor role is filled by Lys168. Substrate is bound at residue Lys170. Residues Lys194, Asp196, and Glu197 each contribute to the Mg(2+) site. An N6-carboxylysine modification is found at Lys194. The active-site Proton acceptor is the His287. Positions 288, 320, and 372 each coordinate substrate.

Belongs to the RuBisCO large chain family. Type I subfamily. As to quaternary structure, heterohexadecamer of 8 large chains and 8 small chains; disulfide-linked. The disulfide link is formed within the large subunit homodimers. Requires Mg(2+) as cofactor. In terms of processing, the disulfide bond which can form in the large chain dimeric partners within the hexadecamer appears to be associated with oxidative stress and protein turnover.

The protein localises to the plastid. It localises to the chloroplast. The enzyme catalyses 2 (2R)-3-phosphoglycerate + 2 H(+) = D-ribulose 1,5-bisphosphate + CO2 + H2O. It catalyses the reaction D-ribulose 1,5-bisphosphate + O2 = 2-phosphoglycolate + (2R)-3-phosphoglycerate + 2 H(+). Its function is as follows. RuBisCO catalyzes two reactions: the carboxylation of D-ribulose 1,5-bisphosphate, the primary event in carbon dioxide fixation, as well as the oxidative fragmentation of the pentose substrate in the photorespiration process. Both reactions occur simultaneously and in competition at the same active site. This Watsonia angusta protein is Ribulose bisphosphate carboxylase large chain.